A 95-amino-acid chain; its full sequence is Small ribosomal subunit protein bS18 (95 aa).

This sequence belongs to the bacterial ribosomal protein bS18 family. As to quaternary structure, part of the 30S ribosomal subunit. Forms a tight heterodimer with protein bS6.

Binds as a heterodimer with protein bS6 to the central domain of the 16S rRNA, where it helps stabilize the platform of the 30S subunit. The protein is Small ribosomal subunit protein bS18 of Rickettsia felis (strain ATCC VR-1525 / URRWXCal2) (Rickettsia azadi).